A 156-amino-acid chain; its full sequence is Endoribonuclease YbeY (156 aa).

Residues His105, His109, and Asp115 each coordinate Zn(2+).

This sequence belongs to the endoribonuclease YbeY family. The cofactor is Zn(2+).

Its subcellular location is the cytoplasm. Its function is as follows. Single strand-specific metallo-endoribonuclease involved in late-stage 70S ribosome quality control and in maturation of the 3' terminus of the 16S rRNA. In Chlorobium chlorochromatii (strain CaD3), this protein is Endoribonuclease YbeY.